The chain runs to 102 residues: MSSGMCPVCGLPKELCICEEVAKEQQRITVKVNRRRYGKEVTVVEGFDASEIDLHELSTYLKSKFACGGTVKGNTVELQGNHLARMKEVLMEKGFSAEQIKN.

This sequence belongs to the SUI1 family.

The polypeptide is Protein translation factor SUI1 homolog (Methanosarcina acetivorans (strain ATCC 35395 / DSM 2834 / JCM 12185 / C2A)).